Here is a 140-residue protein sequence, read N- to C-terminus: Proline-rich nuclear receptor coactivator 2 (140 aa).

A disordered region spans residues Met1 to Ser81. Polar residues-rich tracts occupy residues Asp11 to Lys38 and Ala59 to Ser81. The SH3-binding motif lies at Ser100–Ser106.

It belongs to the PNRC family. PNRC2 subfamily. In terms of assembly, interacts with UPF1/RENT1; preferentially interacts with hyperphosphorylated form. Interacts with DCP1A. Interacts with many nuclear receptors including ESR1, ESRRA, ESRRG, NR3C1/GR, NR5A1, PGR, TR, RAR and RXR. As to expression, strong expression is detected in lung, spleen, ovary, thymus, and colon.

It localises to the nucleus. The protein resides in the cytoplasm. It is found in the P-body. In terms of biological role, involved in nonsense-mediated mRNA decay (NMD) by acting as a bridge between the mRNA decapping complex and the NMD machinery. May act by targeting the NMD machinery to the P-body and recruiting the decapping machinery to aberrant mRNAs. Required for UPF1/RENT1 localization to the P-body. Plays a role in glucocorticoid receptor-mediated mRNA degradation by interacting with the glucocorticoid receptor NR3C1 in a ligand-dependent manner when it is bound to the 5' UTR of target mRNAs and recruiting the RNA helicase UPF1 and the mRNA-decapping enzyme DCP1A, leading to RNA decay. Also acts as a nuclear receptor coactivator. May play a role in controlling the energy balance between energy storage and energy expenditure. The polypeptide is Proline-rich nuclear receptor coactivator 2 (Pnrc2) (Mus musculus (Mouse)).